The sequence spans 248 residues: 3,4-dihydroxyphthalate decarboxylase (248 aa).

The active-site Proton donor/acceptor is the Glu-90. A divalent metal cation is bound by residues Glu-90, His-109, His-111, and His-177.

This sequence belongs to the aldolase class II family. A divalent metal cation is required as a cofactor.

It carries out the reaction 3,4-dihydroxyphthalate + H(+) = 3,4-dihydroxybenzoate + CO2. It participates in xenobiotic degradation; phthalate degradation. Functionally, catalyzes the decarboxylation of 3,4-dihydroxyphthalate to protocatechuate (3,4-dihydroxybenzoate) during phthalate metabolism. The polypeptide is 3,4-dihydroxyphthalate decarboxylase (Arthrobacter keyseri).